The sequence spans 151 residues: 3-hydroxyacyl-[acyl-carrier-protein] dehydratase FabZ (151 aa).

The active site involves His-49.

This sequence belongs to the thioester dehydratase family. FabZ subfamily.

The protein resides in the cytoplasm. The enzyme catalyses a (3R)-hydroxyacyl-[ACP] = a (2E)-enoyl-[ACP] + H2O. In terms of biological role, involved in unsaturated fatty acids biosynthesis. Catalyzes the dehydration of short chain beta-hydroxyacyl-ACPs and long chain saturated and unsaturated beta-hydroxyacyl-ACPs. The sequence is that of 3-hydroxyacyl-[acyl-carrier-protein] dehydratase FabZ from Bordetella bronchiseptica (strain ATCC BAA-588 / NCTC 13252 / RB50) (Alcaligenes bronchisepticus).